Reading from the N-terminus, the 823-residue chain is Apoptosis-resistant E3 ubiquitin protein ligase 1 (823 aa).

One copy of the Filamin repeat lies at 52-158 (GNYLDPRSCK…VAYSPYYKIF (107 aa)). The disordered stretch occupies residues 315-345 (PPMHMTSSQRRPSTAVDEEDEDSPSECHTPE). Residues 483-789 (SISDWSKNFE…THSTLPTAHT (307 aa)) are interaction with SOCS2. In terms of domain architecture, HECT spans 483 to 823 (SISDWSKNFE…SEGCEGFGML (341 aa)). Cysteine 790 serves as the catalytic Glycyl thioester intermediate.

Interacts with SOCS2. Interacts (via HECT domain) with HTRA2, DIABLO/SMAC and SEPTIN4; in the cytoplasm following induction of apoptosis. Post-translationally, autoubiquitinated in vitro in the presence of E2 enzyme UBE2D1/UBCH5A.

The catalysed reaction is S-ubiquitinyl-[E2 ubiquitin-conjugating enzyme]-L-cysteine + [acceptor protein]-L-lysine = [E2 ubiquitin-conjugating enzyme]-L-cysteine + N(6)-ubiquitinyl-[acceptor protein]-L-lysine.. It functions in the pathway protein modification; protein ubiquitination. E3 ubiquitin-protein ligase that catalyzes 'Lys-11'- or 'Lys-33'-linked polyubiquitin chains, with some preference for 'Lys-33' linkages. E3 ubiquitin-protein ligases accept ubiquitin from an E2 ubiquitin-conjugating enzyme in the form of a thioester and then directly transfers the ubiquitin to targeted substrates. Ubiquitinates SEPTIN4, DIABLO/SMAC and HTRA2 in vitro. Modulates pulmonary inflammation by targeting SOCS2 for ubiquitination and subsequent degradation by the proteasome. The chain is Apoptosis-resistant E3 ubiquitin protein ligase 1 from Homo sapiens (Human).